The following is a 515-amino-acid chain: MDEFHRCGKEDSFWQQCFLYPLFFQEDLYAISHDHYLDVSSSSRPMEHLSSNDQLSFLTVKRLIGQIRQQNHSIVLFVNCDPNALADRKKSFYSESVLEALTLVLEVPFSIRSKYSVEGMNECKSFRSIHSIFPFLEDKFPHSNSILDARIPYSIHPEILVRTFRRWIRDAPSLHPLRSVLYDYRNSPENLQRSIIVVPRVNTRFFLFLLNYYVCECESILFSRLKRSSHSRSLSHGSFPQRTHFHRKIKHIIIFSRRNSLKSIWSLKDPKINYVRYGERPIIAIKGAHLLVKKCRYYLLIFRQFYFHLWSEPYRVCSHQLSKNCSSSPGYFLRVRMNPIFVRTKMLDELFIADLITNEMDPIVPIVPIIGLLAAEKFCDISGRPISKLSWTSLTDDDILDRFDQIWRNLFHYYSGSFDRDGLYRIKYILSLSCAKTLACKHKSTIRVVRKELGPELLKKSFSKEREFDSLPFSSKAAARSQRERIWHSDILQINPLANSWQKIQDLKIENLFDQ.

The protein belongs to the intron maturase 2 family. MatK subfamily.

It is found in the plastid. It localises to the chloroplast. Usually encoded in the trnK tRNA gene intron. Probably assists in splicing its own and other chloroplast group II introns. This Pinus halepensis (Aleppo pine) protein is Maturase K.